The primary structure comprises 191 residues: Leucyl/phenylalanyl-tRNA--protein transferase (191 aa).

This sequence belongs to the L/F-transferase family.

Its subcellular location is the cytoplasm. It catalyses the reaction N-terminal L-lysyl-[protein] + L-leucyl-tRNA(Leu) = N-terminal L-leucyl-L-lysyl-[protein] + tRNA(Leu) + H(+). The enzyme catalyses N-terminal L-arginyl-[protein] + L-leucyl-tRNA(Leu) = N-terminal L-leucyl-L-arginyl-[protein] + tRNA(Leu) + H(+). The catalysed reaction is L-phenylalanyl-tRNA(Phe) + an N-terminal L-alpha-aminoacyl-[protein] = an N-terminal L-phenylalanyl-L-alpha-aminoacyl-[protein] + tRNA(Phe). In terms of biological role, functions in the N-end rule pathway of protein degradation where it conjugates Leu, Phe and, less efficiently, Met from aminoacyl-tRNAs to the N-termini of proteins containing an N-terminal arginine or lysine. The protein is Leucyl/phenylalanyl-tRNA--protein transferase of Nostoc punctiforme (strain ATCC 29133 / PCC 73102).